We begin with the raw amino-acid sequence, 327 residues long: Zinc transport protein ZntB (327 aa).

Residues 1-271 (MESFAGKELQ…AMNRRTYTMS (271 aa)) are Cytoplasmic-facing. The helical transmembrane segment at 272 to 292 (LLAMVFLPTTFLTGLFGVNLG) threads the bilayer. Residues 293 to 300 (GIPGGDAP) lie on the Periplasmic side of the membrane. The helical transmembrane segment at 301 to 321 (FGFFTFCLMLVILVGGVAWWL) threads the bilayer. The Cytoplasmic segment spans residues 322 to 327 (KRSKWL).

Belongs to the CorA metal ion transporter (MIT) (TC 1.A.35) family.

The protein localises to the cell inner membrane. The enzyme catalyses Zn(2+)(out) + H(+)(out) = Zn(2+)(in) + H(+)(in). In terms of biological role, zinc transporter. Acts as a Zn(2+):proton symporter, which likely mediates zinc ion uptake. This is Zinc transport protein ZntB from Pectobacterium carotovorum subsp. carotovorum (strain PC1).